Reading from the N-terminus, the 292-residue chain is 1,4-dihydroxy-2-naphthoate octaprenyltransferase (292 aa).

Transmembrane regions (helical) follow at residues 35–55 (AAVWWKALLALAVAVALVIGV), 101–121 (ALAGLVLALLSAPWLIAVGAI), 137–157 (GYAGFGELAVFVFFGPVAVLG), 166–186 (VDWVGLAQAVATGALSCSVLV), 220–240 (LLAVAGVLTFVLMLATPWCVV), and 271–291 (TGLAMLVWALAVAGALAFGQL).

It belongs to the MenA family. Type 1 subfamily. Mg(2+) serves as cofactor.

It is found in the cell membrane. The enzyme catalyses an all-trans-polyprenyl diphosphate + 1,4-dihydroxy-2-naphthoate + H(+) = a 2-demethylmenaquinol + CO2 + diphosphate. The protein operates within quinol/quinone metabolism; menaquinone biosynthesis; menaquinol from 1,4-dihydroxy-2-naphthoate: step 1/2. Activity is abolished by EDTA. Inhibited by Ro 48-8071, which is non-competitive with regard to DHNA and competitive with regard to the isoprenyldiphosphate substrate. In terms of biological role, conversion of 1,4-dihydroxy-2-naphthoate (DHNA) to demethylmenaquinone (DMK). Can use a variety of allylic isoprenyl diphosphates as substrates but has a requirement for at least three isoprene units. The chain is 1,4-dihydroxy-2-naphthoate octaprenyltransferase from Mycobacterium tuberculosis (strain ATCC 25618 / H37Rv).